Consider the following 277-residue polypeptide: Large ribosomal subunit protein uL2 (277 aa).

The interval Thr-219–Lys-277 is disordered.

The protein belongs to the universal ribosomal protein uL2 family. In terms of assembly, part of the 50S ribosomal subunit. Forms a bridge to the 30S subunit in the 70S ribosome.

Functionally, one of the primary rRNA binding proteins. Required for association of the 30S and 50S subunits to form the 70S ribosome, for tRNA binding and peptide bond formation. It has been suggested to have peptidyltransferase activity; this is somewhat controversial. Makes several contacts with the 16S rRNA in the 70S ribosome. The chain is Large ribosomal subunit protein uL2 from Clostridium botulinum (strain ATCC 19397 / Type A).